We begin with the raw amino-acid sequence, 399 residues long: F420-dependent formate dehydrogenase subunit beta (399 aa).

2 consecutive 4Fe-4S ferredoxin-type domains span residues 287–307 and 339–367; these read TEYM…EACP and ERML…LAKI. Residues C296, C299, C302, C306, C348, C351, C354, and C358 each contribute to the [4Fe-4S] cluster site.

The protein belongs to the FrhB family. As to quaternary structure, dimer of an alpha (FdhA) and a beta (FdhB) subunit. It depends on [4Fe-4S] cluster as a cofactor. The cofactor is FAD. Zn(2+) is required as a cofactor.

The enzyme catalyses oxidized coenzyme F420-(gamma-L-Glu)(n) + formate + 2 H(+) = reduced coenzyme F420-(gamma-L-Glu)(n) + CO2. Is extremely sensitive to oxygen. Contains a FAD that is required for coenzyme F420-dependent activity but not for methyl viologen-dependent activity. Preincubation of the FAD-depleted enzyme with FAD restores coenzyme F420-dependent activity. Neither FMN nor FADH2 can replace FAD. Strongly inhibited by cyanide, azide, alpha,alpha-dipyridyl and 1,10-phenanthroline. Catalyzes the oxidation of formate to carbon dioxide, with coenzyme F420 as the electron acceptor. In vitro can also use methyl viologen, 7,8-didemethyl-8-hydroxy-5-deazariboflavin (or FO, a hydrolytic derivative of coenzyme F420), FMN and FAD as electron acceptors, but not NAD(+) or NADP(+). This is F420-dependent formate dehydrogenase subunit beta from Methanobacterium formicicum.